Consider the following 990-residue polypeptide: Storkhead-box protein 1 (990 aa).

Residues 396–408 (TTRHKDSSKEVIG) are compositionally biased toward basic and acidic residues. Disordered stretches follow at residues 396–471 (TTRH…VHHL), 562–586 (VAKA…PRRV), 712–736 (GLSD…DGGC), and 809–832 (LFSN…SRIP). Residues 416 to 431 (KSRRRGSSHKGRHKAR) are compositionally biased toward basic residues. Over residues 809–830 (LFSNAGESPNPDLSDNPGQNSR) the composition is skewed to polar residues.

As to expression, detected in sensory epithelial cells of the inner ear but not in adjacent surrounding tissue (at protein level).

It localises to the nucleus. Its subcellular location is the cytoplasm. The protein localises to the cytoskeleton. The protein resides in the microtubule organizing center. It is found in the centrosome. In terms of biological role, involved in regulating the levels of reactive oxidative species and reactive nitrogen species and in mitochondrial homeostasis in the placenta. Required for regulation of inner ear epithelial cell proliferation via the AKT signaling pathway. Involved in cell cycle regulation by binding to the CCNB1 promoter, up-regulating its expression and promoting mitotic entry. Induces phosphorylation of MAPT/tau. The chain is Storkhead-box protein 1 from Mus musculus (Mouse).